Consider the following 157-residue polypeptide: Cysteine protease Nivulian-2 (157 aa).

It belongs to the intron maturase 2 family. MatK subfamily. Monomer. Post-translationally, glycosylated. In terms of tissue distribution, accumulates in latex (at protein level).

With respect to regulation, inhibited by HgCl(2), iodoacetamide (IAA) and, to a far lesser extent, by SDS, hydrogen peroxide H(1)O(2), KCl, NaCl, ZnCl(2), AgSO(4), CdCl(2), FeCl(3), PMSF, Pepstatin A and EDTA. Repressed moderately by many organic solvents such as diethyl ether, ethy lacetate, acetophenone, butanol, trichloroethylene, tetrahydrofuran, methanol, chloroform and dichloromethane, and, to a lesser extent, by propanol, benzyl alcohol and chlorobenzene. Its function is as follows. Cysteine protease inducing milk clotting by cleaving casein. Exhibits biomedical activities such as wound healing, haemostatic and antibacterial activity, as well as agricultural application in biocontrol process against the infectious management of the root knot nematode Meloidogyne incognita. The protein is Cysteine protease Nivulian-2 of Euphorbia nivulia (Leafy milk hedge).